Reading from the N-terminus, the 769-residue chain is Calcium up-regulated protein F (769 aa).

Residues 1–21 form a disordered region; the sequence is MINIKDISKSSNQSEEKSLKG. Ricin B-type lectin domains follow at residues 25–145 and 116–249; these read KTKY…WTTF and QGNG…WGIN.

This sequence belongs to the cup family.

Its subcellular location is the cytoplasm. It is found in the membrane. Functionally, may play an important role in stabilizing and/or regulating the cell membrane during Ca(2+) stress or certain stages of development. The sequence is that of Calcium up-regulated protein F (cupF) from Dictyostelium discoideum (Social amoeba).